The primary structure comprises 1056 residues: Isoleucine--tRNA ligase (1056 aa).

Positions 56–66 match the 'HIGH' region motif; it reads PFATGLPHYGH. The 'KMSKS' region motif lies at 603–607; the sequence is KMSKS. Residue Lys-606 participates in ATP binding.

It belongs to the class-I aminoacyl-tRNA synthetase family. IleS type 2 subfamily. As to quaternary structure, monomer. The cofactor is Zn(2+).

Its subcellular location is the cytoplasm. It catalyses the reaction tRNA(Ile) + L-isoleucine + ATP = L-isoleucyl-tRNA(Ile) + AMP + diphosphate. In terms of biological role, catalyzes the attachment of isoleucine to tRNA(Ile). As IleRS can inadvertently accommodate and process structurally similar amino acids such as valine, to avoid such errors it has two additional distinct tRNA(Ile)-dependent editing activities. One activity is designated as 'pretransfer' editing and involves the hydrolysis of activated Val-AMP. The other activity is designated 'posttransfer' editing and involves deacylation of mischarged Val-tRNA(Ile). In Bdellovibrio bacteriovorus (strain ATCC 15356 / DSM 50701 / NCIMB 9529 / HD100), this protein is Isoleucine--tRNA ligase.